A 236-amino-acid chain; its full sequence is 2,3,4,5-tetrahydropyridine-2,6-dicarboxylate N-acetyltransferase (236 aa).

It belongs to the transferase hexapeptide repeat family. DapH subfamily.

The enzyme catalyses (S)-2,3,4,5-tetrahydrodipicolinate + acetyl-CoA + H2O = L-2-acetamido-6-oxoheptanedioate + CoA. The protein operates within amino-acid biosynthesis; L-lysine biosynthesis via DAP pathway; LL-2,6-diaminopimelate from (S)-tetrahydrodipicolinate (acetylase route): step 1/3. Functionally, catalyzes the transfer of an acetyl group from acetyl-CoA to tetrahydrodipicolinate. The sequence is that of 2,3,4,5-tetrahydropyridine-2,6-dicarboxylate N-acetyltransferase from Geobacillus sp. (strain WCH70).